The chain runs to 124 residues: MPLYEHVFLARQDLAQTQVDGLAATATSIIEEKSGKVVKTEIWGLRNLAYRIQKNRKAYYIMLEIDAPADAIQELERQMALNEDVIRYMTVRVDAHEQGPSAMMRRGDRDRSNRSDRRRDRDAA.

The tract at residues 97-124 (EQGPSAMMRRGDRDRSNRSDRRRDRDAA) is disordered. Over residues 105–124 (RRGDRDRSNRSDRRRDRDAA) the composition is skewed to basic and acidic residues.

It belongs to the bacterial ribosomal protein bS6 family.

Binds together with bS18 to 16S ribosomal RNA. The chain is Small ribosomal subunit protein bS6 from Zymomonas mobilis subsp. mobilis (strain ATCC 31821 / ZM4 / CP4).